The sequence spans 46 residues: Denclatoxin-B (46 aa).

3 disulfides stabilise this stretch: Cys-3-Cys-40, Cys-4-Cys-32, and Cys-16-Cys-26.

This sequence belongs to the plant thionin (TC 1.C.44) family.

It is found in the secreted. Its function is as follows. Thionins are small plant proteins which are toxic to animal cells. They seem to exert their toxic effect at the level of the cell membrane. Their precise function is not known. This is Denclatoxin-B from Dendrophthora clavata (Columbian mistletoe).